The chain runs to 38 residues: Large ribosomal subunit protein bL36 (38 aa).

Belongs to the bacterial ribosomal protein bL36 family.

The polypeptide is Large ribosomal subunit protein bL36 (Prosthecochloris aestuarii (strain DSM 271 / SK 413)).